A 177-amino-acid chain; its full sequence is Large ribosomal subunit protein uL6 (177 aa).

The protein belongs to the universal ribosomal protein uL6 family. In terms of assembly, part of the 50S ribosomal subunit.

In terms of biological role, this protein binds to the 23S rRNA, and is important in its secondary structure. It is located near the subunit interface in the base of the L7/L12 stalk, and near the tRNA binding site of the peptidyltransferase center. The protein is Large ribosomal subunit protein uL6 of Zymomonas mobilis subsp. mobilis (strain ATCC 31821 / ZM4 / CP4).